The chain runs to 229 residues: MTKKKAFTPLPYLASIVFLPWWISFSFNKSLESWVIHWWNTSQPEAFLNDIQEKNVLEKFIELEELFLLDEMIKEYPKTHIQKFRIGIHKETIQLVKMHNEGHIHTFLQFSTNIISFAILSGYSILGNEELVVLNSWIREFLYNLSDTIKAFSILLLTDLCIGFHSPHGWELMIDFVYKDFGFSHNDQIISGLVSTFPVILDTIFKYWIFRYLNRVSPSLVVIYHSMND.

A run of 4 helical transmembrane segments spans residues 7 to 27, 114 to 134, 154 to 174, and 189 to 209; these read FTPL…SFSF, IISF…LVVL, ILLL…ELMI, and IISG…KYWI.

The protein belongs to the CemA family.

It localises to the plastid. Its subcellular location is the chloroplast inner membrane. The enzyme catalyses K(+)(in) + H(+)(out) = K(+)(out) + H(+)(in). In terms of biological role, contributes to K(+)/H(+) antiport activity by supporting proton efflux to control proton extrusion and homeostasis in chloroplasts in a light-dependent manner to modulate photosynthesis. Prevents excessive induction of non-photochemical quenching (NPQ) under continuous-light conditions. Indirectly promotes efficient inorganic carbon uptake into chloroplasts. In Nandina domestica (Heavenly bamboo), this protein is Potassium/proton antiporter CemA.